A 1015-amino-acid polypeptide reads, in one-letter code: DNA polymerase catalytic subunit (1015 aa).

The protein belongs to the DNA polymerase type-B family. As to quaternary structure, forms a complex with the major DNA-binding protein BALF2, the DNA polymerase processivity factor BMRF1, and the alkaline exonuclease BGLF5. Interacts with the putative helicase-primase complex composed of BBLF4, BSLF1 and BBLF2/3 proteins; these interactions may coordinate leading and lagging strand DNA synthesis at the replication fork.

The protein resides in the host nucleus. It catalyses the reaction DNA(n) + a 2'-deoxyribonucleoside 5'-triphosphate = DNA(n+1) + diphosphate. Functionally, replicates viral genomic DNA in the late phase of lytic infection, producing long concatemeric DNA. The replication complex is composed of six viral proteins: the DNA polymerase, processivity factor, primase, primase-associated factor, helicase, and ssDNA-binding protein. The chain is DNA polymerase catalytic subunit from Homo sapiens (Human).